A 351-amino-acid polypeptide reads, in one-letter code: MAKLRVGLLFGGRSGEHEVSLNSAKAIATALQSGENPQKYDIIPIYIQKNGVWQAGDTAQQVLNDAKPLPCEDATSQQLWTFPPQVSEVDVWFPILHGPNGEDGTLQGLLTLMQTPFVGSGVLGSAVGMDKIAMKMAFAQAGLPQVKYIAVDRAQIWSNPCVFPKLCDEIEQRLGYPCFVKPANLGSSVGIAKVRSRSELEKALDSAASYDRRIVIETGVKAREVECAVLGNENPKASVIGEITYNSDFYDYEAKYTDGMAQMHIPAQLPDAIVTQIQDMAIQAFKAVDGAGLARVDFFYVEDSQEVFINEINTLPGFTAFSMYPQLWKETGVPFAELVDQLIQLALERKQ.

The region spanning 135–344 (KMAFAQAGLP…FAELVDQLIQ (210 aa)) is the ATP-grasp domain. 171–226 (EQRLGYPCFVKPANLGSSVGIAKVRSRSELEKALDSAASYDRRIVIETGVKAREVE) contacts ATP. Positions 297, 311, and 313 each coordinate Mg(2+).

Belongs to the D-alanine--D-alanine ligase family. It depends on Mg(2+) as a cofactor. The cofactor is Mn(2+).

It is found in the cytoplasm. It carries out the reaction 2 D-alanine + ATP = D-alanyl-D-alanine + ADP + phosphate + H(+). It participates in cell wall biogenesis; peptidoglycan biosynthesis. In terms of biological role, cell wall formation. The protein is D-alanine--D-alanine ligase of Rippkaea orientalis (strain PCC 8801 / RF-1) (Cyanothece sp. (strain PCC 8801)).